The following is a 183-amino-acid chain: uncharacterized protein (183 aa).

The first 29 residues, 1–29 (MQCWQQPFLRFLQQPFFLATASLAGSSSS), serve as a signal peptide directing secretion. The tract at residues 149–183 (PGSTCDGSLKGRAYPSCVPKRDPEHSREESHPLSG) is disordered. The segment covering 167–183 (PKRDPEHSREESHPLSG) has biased composition (basic and acidic residues).

The protein resides in the secreted. This is an uncharacterized protein from Homo sapiens (Human).